A 1513-amino-acid polypeptide reads, in one-letter code: Lid2 complex component lid2 (1513 aa).

The 42-residue stretch at 56–97 folds into the JmjN domain; that stretch reads GLSVQLNASNMTDPFKFLLDNWHTIFKNGAIKLLPPEGWQIP. Residues 121-212 form the ARID domain; sequence YEKNYDYFKK…YIKPFERDSS (92 aa). Residues 211 to 253 are disordered; that stretch reads SSPSFKSKRSESSTRKIRNTRSSAQQESPIPETSAQSPVQTIQ. The segment covering 230 to 253 has biased composition (polar residues); it reads TRSSAQQESPIPETSAQSPVQTIQ. The segment at 268-318 adopts a PHD-type 1 zinc-finger fold; sequence GEQCEYCGLDKNPETILLCDGCEAAYHTSCLDPPLTSIPKEDWYCDACKFN. The JmjC domain occupies 408–574; it reads KYSSEPWNLH…DGLLNSSISV (167 aa). S722 is modified (phosphoserine). The segment at 1063 to 1086 is disordered; it reads LSLNDRPGPPMEPASRETSPDSEG. Residues 1076–1086 are compositionally biased toward basic and acidic residues; that stretch reads ASRETSPDSEG. A PHD-type 2 zinc finger spans residues 1093 to 1145; it reads KKGCIFCFCRLPESGVMIECEICHEWYHAKCLKMSKKKLRQDEKFTCPICDYR. An RING-type 1; degenerate zinc finger spans residues 1096–1143; it reads CIFCFCRLPESGVMIECEICHEWYHAKCLKMSKKKLRQDEKFTCPICD. Disordered stretches follow at residues 1244-1268 and 1280-1327; these read APNPPPIIGESKSTRKPRPTKRQRQ and ASAI…NNKN. Positions 1257 to 1268 are enriched in basic residues; that stretch reads TRKPRPTKRQRQ. The span at 1301-1313 shows a compositional bias: basic and acidic residues; sequence VEAETKSKSEKSP. Positions 1316–1326 are enriched in polar residues; the sequence is NGTNISDANNK. The PHD-type 3 zinc-finger motif lies at 1352–1403; the sequence is NSSCLCGEEFSPRDSFIDCTICERRFHYDCVGLNNEIADSVSKFTCPICMEQ. Residues 1354-1401 form an RING-type 2; degenerate zinc finger; it reads SCLCGEEFSPRDSFIDCTICERRFHYDCVGLNNEIADSVSKFTCPICM.

As to quaternary structure, component of the Lid2 complex composed of ash2, jmj3, lid2, sdc1 and snt2.

It is found in the nucleus. The protein is Lid2 complex component lid2 (lid2) of Schizosaccharomyces pombe (strain 972 / ATCC 24843) (Fission yeast).